We begin with the raw amino-acid sequence, 513 residues long: Probable mannosyl-oligosaccharide alpha-1,2-mannosidase 1B (513 aa).

The N-terminal stretch at 1–21 is a signal peptide; it reads MHLSSLSLSLTALAIVSPSAA. Residues N97, N117, N184, N251, N322, N348, and N368 are each glycosylated (N-linked (GlcNAc...) asparagine). C334 and C363 form a disulfide bridge. E377 acts as the Proton donor in catalysis. Position 503 (T503) interacts with Ca(2+).

The protein belongs to the glycosyl hydrolase 47 family. In terms of assembly, monomer. It depends on Ca(2+) as a cofactor. Requires Mg(2+) as cofactor.

It localises to the cytoplasmic vesicle lumen. The enzyme catalyses N(4)-(alpha-D-Man-(1-&gt;2)-alpha-D-Man-(1-&gt;2)-alpha-D-Man-(1-&gt;3)-[alpha-D-Man-(1-&gt;2)-alpha-D-Man-(1-&gt;3)-[alpha-D-Man-(1-&gt;2)-alpha-D-Man-(1-&gt;6)]-alpha-D-Man-(1-&gt;6)]-beta-D-Man-(1-&gt;4)-beta-D-GlcNAc-(1-&gt;4)-beta-D-GlcNAc)-L-asparaginyl-[protein] (N-glucan mannose isomer 9A1,2,3B1,2,3) + 4 H2O = N(4)-(alpha-D-Man-(1-&gt;3)-[alpha-D-Man-(1-&gt;3)-[alpha-D-Man-(1-&gt;6)]-alpha-D-Man-(1-&gt;6)]-beta-D-Man-(1-&gt;4)-beta-D-GlcNAc-(1-&gt;4)-beta-D-GlcNAc)-L-asparaginyl-[protein] (N-glucan mannose isomer 5A1,2) + 4 beta-D-mannose. It carries out the reaction N(4)-(alpha-D-Man-(1-&gt;2)-alpha-D-Man-(1-&gt;2)-alpha-D-Man-(1-&gt;3)-[alpha-D-Man-(1-&gt;3)-[alpha-D-Man-(1-&gt;2)-alpha-D-Man-(1-&gt;6)]-alpha-D-Man-(1-&gt;6)]-beta-D-Man-(1-&gt;4)-beta-D-GlcNAc-(1-&gt;4)-beta-D-GlcNAc)-L-asparaginyl-[protein] (N-glucan mannose isomer 8A1,2,3B1,3) + 3 H2O = N(4)-(alpha-D-Man-(1-&gt;3)-[alpha-D-Man-(1-&gt;3)-[alpha-D-Man-(1-&gt;6)]-alpha-D-Man-(1-&gt;6)]-beta-D-Man-(1-&gt;4)-beta-D-GlcNAc-(1-&gt;4)-beta-D-GlcNAc)-L-asparaginyl-[protein] (N-glucan mannose isomer 5A1,2) + 3 beta-D-mannose. It participates in protein modification; protein glycosylation. In terms of biological role, involved in the maturation of Asn-linked oligosaccharides. Progressively trims alpha-1,2-linked mannose residues from Man(9)GlcNAc(2) to produce Man(5)GlcNAc(2). The polypeptide is Probable mannosyl-oligosaccharide alpha-1,2-mannosidase 1B (mns1B) (Aspergillus niger (strain ATCC MYA-4892 / CBS 513.88 / FGSC A1513)).